The chain runs to 555 residues: MTNPTNCPIWHDLSAHYQEVLPLQMRDMFTKDGRRFEKFSLEAEGLLLDYSKHRITDETLPLLFKLARDSKVEEWRDRMFAGEKINFTENRAVLHTALRNRSNTPVYVDGKDVMPDVNRVLAQMRKFSTSIRSGEWKGYSGKRITDVVNIGIGGSDLGPVMVCGALKPYAQAGLNAHFVSNIDGTHLAQTLERCDPETTLFIVASKTFTTQETMTNARSARSWFLQAAKDEAHVAKHFVAISTNADEVGKFGIDAANMFEFWDWVGGRYSLWSAIGLSIAIYIGMDHFEELLQGGYEIDRHFKNAPLEQNIPVIMALLGIWYNNFFGADSLAILPYDQGLARFPAYLQQADMESNGKFVARDGRIVQCTTGPIIWGEAGTNGQHAFYQLIHQGNRLIPCDFMMPLQSHYSMGKNGNEHHLILLANCFAQTSALMQGKTLDEAKAELVAQGLTGEALETLLPHKVFEGNRPSTTILFDKLTPKTLGKLIAIYEHKIFVQGIIWNINSFDQWGVEYGKQIAKKILPQLSEDQASTEYDSSTNGLMNYFKSRTQSSGT.

Residue E353 is the Proton donor of the active site. Catalysis depends on residues H384 and K516.

It belongs to the GPI family.

The protein resides in the cytoplasm. It catalyses the reaction alpha-D-glucose 6-phosphate = beta-D-fructose 6-phosphate. It participates in carbohydrate biosynthesis; gluconeogenesis. The protein operates within carbohydrate degradation; glycolysis; D-glyceraldehyde 3-phosphate and glycerone phosphate from D-glucose: step 2/4. Functionally, catalyzes the reversible isomerization of glucose-6-phosphate to fructose-6-phosphate. In Methylobacillus flagellatus (strain ATCC 51484 / DSM 6875 / VKM B-1610 / KT), this protein is Glucose-6-phosphate isomerase.